Here is a 115-residue protein sequence, read N- to C-terminus: NAD(P)H-quinone oxidoreductase subunit M (115 aa).

The protein belongs to the complex I NdhM subunit family. In terms of assembly, NDH-1 can be composed of about 15 different subunits; different subcomplexes with different compositions have been identified which probably have different functions.

The protein localises to the cellular thylakoid membrane. It carries out the reaction a plastoquinone + NADH + (n+1) H(+)(in) = a plastoquinol + NAD(+) + n H(+)(out). It catalyses the reaction a plastoquinone + NADPH + (n+1) H(+)(in) = a plastoquinol + NADP(+) + n H(+)(out). Its function is as follows. NDH-1 shuttles electrons from an unknown electron donor, via FMN and iron-sulfur (Fe-S) centers, to quinones in the respiratory and/or the photosynthetic chain. The immediate electron acceptor for the enzyme in this species is believed to be plastoquinone. Couples the redox reaction to proton translocation, and thus conserves the redox energy in a proton gradient. Cyanobacterial NDH-1 also plays a role in inorganic carbon-concentration. This is NAD(P)H-quinone oxidoreductase subunit M from Synechococcus sp. (strain WH7803).